Reading from the N-terminus, the 158-residue chain is Cell number regulator 11 (158 aa).

The next 2 membrane-spanning stretches (helical) occupy residues 49-67 (FGDL…VTFG) and 78-94 (TCCM…TIGW).

It belongs to the cornifelin family.

Its subcellular location is the membrane. This Zea mays (Maize) protein is Cell number regulator 11 (CNR11).